Here is a 626-residue protein sequence, read N- to C-terminus: Chaperone protein HtpG (626 aa).

The tract at residues 1–339 is a; substrate-binding; it reads MSTNQETRGF…SNDLPLNVSR (339 aa). The b stretch occupies residues 340–555; it reads EILQDNKVTA…NDQMTTQMAK (216 aa). The c stretch occupies residues 556-626; that stretch reads LFAAAGQPVP…FIKRINKLLG (71 aa).

The protein belongs to the heat shock protein 90 family. Homodimer.

The protein localises to the cytoplasm. Molecular chaperone. Has ATPase activity. This chain is Chaperone protein HtpG, found in Aggregatibacter actinomycetemcomitans (Actinobacillus actinomycetemcomitans).